Consider the following 474-residue polypeptide: Homeobox protein PKNOX2 (474 aa).

The disordered stretch occupies residues 1–42; sequence MMQHASPAPALTMMATQNVPPPPYQDSPQMTATAQPPSKAQA. The span at 26–38 shows a compositional bias: polar residues; the sequence is DSPQMTATAQPPS. Residues 96 to 179 form the MEIS N-terminal domain; the sequence is GSECITSASF…MHSDNLLRND (84 aa). Residues 291-350 constitute a DNA-binding region (homeobox); the sequence is KRGVLPKHATNIMRSWLFQHLMHPYPTEDEKRQIAAQTNLTLLQVNNWFINARRRILQPM. Disordered stretches follow at residues 351–371, 385–405, and 423–474; these read LDASNPDPAPKAKKIKSQHRP, LQQQGGTPGTNPDGSINLDNL, and AAHD…DSLE. The segment covering 361–371 has biased composition (basic residues); sequence KAKKIKSQHRP. The span at 429–456 shows a compositional bias: acidic residues; sequence LDGTEEEDEDDMEEEEEEEEELEEEADE.

The protein belongs to the TALE/MEIS homeobox family.

The protein localises to the nucleus. This chain is Homeobox protein PKNOX2 (Pknox2), found in Mus musculus (Mouse).